We begin with the raw amino-acid sequence, 95 residues long: Large ribosomal subunit protein bL25 (95 aa).

Belongs to the bacterial ribosomal protein bL25 family. Part of the 50S ribosomal subunit; part of the 5S rRNA/L5/L18/L25 subcomplex. Contacts the 5S rRNA. Binds to the 5S rRNA independently of L5 and L18.

In terms of biological role, this is one of the proteins that binds to the 5S RNA in the ribosome where it forms part of the central protuberance. This Shewanella amazonensis (strain ATCC BAA-1098 / SB2B) protein is Large ribosomal subunit protein bL25.